A 333-amino-acid polypeptide reads, in one-letter code: Flagellar P-ring protein (333 aa).

A signal peptide spans 1–22; that stretch reads MRRNILSMFLFITLIIYSSIFA.

The protein belongs to the FlgI family. In terms of assembly, the basal body constitutes a major portion of the flagellar organelle and consists of four rings (L,P,S, and M) mounted on a central rod.

It is found in the periplasm. It localises to the bacterial flagellum basal body. Functionally, assembles around the rod to form the L-ring and probably protects the motor/basal body from shearing forces during rotation. The protein is Flagellar P-ring protein of Fervidobacterium nodosum (strain ATCC 35602 / DSM 5306 / Rt17-B1).